The primary structure comprises 131 residues: Small ribosomal subunit protein uS8 (131 aa).

Belongs to the universal ribosomal protein uS8 family. In terms of assembly, part of the 30S ribosomal subunit. Contacts proteins S5 and S12.

In terms of biological role, one of the primary rRNA binding proteins, it binds directly to 16S rRNA central domain where it helps coordinate assembly of the platform of the 30S subunit. The protein is Small ribosomal subunit protein uS8 of Phocaeicola vulgatus (strain ATCC 8482 / DSM 1447 / JCM 5826 / CCUG 4940 / NBRC 14291 / NCTC 11154) (Bacteroides vulgatus).